The chain runs to 732 residues: MNVNSSAFERTNRFPSFPVLKDDQKTSSDSIAAAKKKDLLSLISSKSLLSSETLGWFSVICAFSITGSGLEVNTMSIPFYLIFGIFAFVSFTTQYLGIYSFSFQPFQLLNVIIASLSMVFITLGAFVLGTLDTTCLLLLAFKLFFIRNDPTPFNARSANLKNYIAFPICLFVINHILILLGYFQCSYSVFYASVFYILLGVFIRVFYLVNKEKFEKKELAFLFSSIVVACLIQFNVLPLGTINLSVTRFTILCFMQIFCINWDGIARIQFYLGKFDISLIMALISAIINKTASQNSIKIISCLYQVGFCFFKIGSSITANLKLPDNSRIYRLYNDFIVNGVLADKESRSIFYFFLLNVSYMFVQVIYGLWTNSLGLISDAIHMAFDCIAILVGLVATTLAKMPLNYAYPFGFAKIEALSGFTNGIFLVLISFSIVGEALYRLFHPPQMNTDQLLLVSFLGLVVNLVGILAFNHGHNHDHGSHHHHSHSNHSMCLPNTTNDINIFEEFEEEKDNVEAQKMGYTNDDHVSQHEHTHENSQEHHHEHNHNHDHIHKYNEKCDHESISLQNLDNDHHCHHHHENHNMHGIFLHIIADTMGSVGVIVSTILIQWFSWTGFDPLASLIIAALIFVSVLPLIKDSAKNLLSVTDPESEYLLKQCLSNISLSNSVISLSNPKFWTNERGEVYGILHIQVSIDGDLNVVRNEVFRKLSIAVPNLKHICIQSERPNNCWCGK.

12 helical membrane-spanning segments follow: residues 52–72 (ETLG…GLEV), 79–99 (FYLI…LGIY), 111–131 (VIIA…LGTL), 163–183 (YIAF…LGYF), 189–209 (VFYA…FYLV), 219–239 (LAFL…VLPL), 240–260 (GTIN…IFCI), 268–288 (IQFY…SAII), 350–370 (IFYF…YGLW), 380–400 (AIHM…TTLA), 415–435 (IEAL…FSIV), and 453–473 (LLLV…AFNH). The tract at residues 526 to 547 (HVSQHEHTHENSQEHHHEHNHN) is disordered. 2 helical membrane-spanning segments follow: residues 586–606 (IFLH…STIL) and 615–635 (FDPL…LPLI).

This sequence belongs to the cation diffusion facilitator (CDF) transporter (TC 2.A.4) family. SLC30A subfamily. In terms of assembly, interacts with zrg17.

The protein localises to the endoplasmic reticulum membrane. Its subcellular location is the golgi apparatus. The protein resides in the cis-Golgi network membrane. Its function is as follows. Probable zinc transporter involved in Golgi membrane trafficking through the regulation of zinc homeostasis. The protein is Probable zinc transporter cis4 (cis4) of Schizosaccharomyces pombe (strain 972 / ATCC 24843) (Fission yeast).